We begin with the raw amino-acid sequence, 490 residues long: Dual specificity protein kinase CLK3 (490 aa).

Residues 1–138 are disordered; the sequence is MHHCKRYRSP…SKRSSRSVED (138 aa). Residue tyrosine 7 is modified to Phosphotyrosine. Serine 9, serine 49, serine 51, serine 67, serine 76, and serine 78 each carry phosphoserine. Composition is skewed to basic and acidic residues over residues 26–56 and 63–76; these read YSRE…DRIP and EHRD…EERS. A compositionally biased stretch (basic residues) spans 88 to 116; it reads RSRHRRRSRERGPYRTRKHAHHCHKRRTR. Residues 117–130 are compositionally biased toward low complexity; that stretch reads SCSSASSRSQQSSK. A Phosphoserine modification is found at serine 135. The 317-residue stretch at 156-472 folds into the Protein kinase domain; sequence YEIVGNLGEG…LAEALLHPFF (317 aa). Residues 162–170 and lysine 186 each bind ATP; that span reads LGEGTFGKV. Aspartate 283 (proton acceptor) is an active-site residue.

Belongs to the protein kinase superfamily. CMGC Ser/Thr protein kinase family. Lammer subfamily. Post-translationally, autophosphorylates on all three types of residues.

The protein resides in the nucleus. It localises to the cytoplasm. The protein localises to the cytoplasmic vesicle. It is found in the secretory vesicle. Its subcellular location is the acrosome. It carries out the reaction L-seryl-[protein] + ATP = O-phospho-L-seryl-[protein] + ADP + H(+). The enzyme catalyses L-threonyl-[protein] + ATP = O-phospho-L-threonyl-[protein] + ADP + H(+). The catalysed reaction is L-tyrosyl-[protein] + ATP = O-phospho-L-tyrosyl-[protein] + ADP + H(+). Its activity is regulated as follows. Leucettine L41 inhibits its kinase activity and affects the regulation of alternative splicing mediated by phosphorylation of SR proteins. Its function is as follows. Dual specificity kinase acting on both serine/threonine and tyrosine-containing substrates. Phosphorylates serine- and arginine-rich (SR) proteins of the spliceosomal complex. May be a constituent of a network of regulatory mechanisms that enable SR proteins to control RNA splicing and can cause redistribution of SR proteins from speckles to a diffuse nucleoplasmic distribution. Phosphorylates SRSF1 and SRSF3. Regulates the alternative splicing of tissue factor (F3) pre-mRNA in endothelial cells. The chain is Dual specificity protein kinase CLK3 (Clk3) from Rattus norvegicus (Rat).